Here is a 153-residue protein sequence, read N- to C-terminus: Superoxide dismutase [Cu-Zn] (153 aa).

3 residues coordinate Cu cation: His45, His47, and His62. A disulfide bridge connects residues Cys56 and Cys145. Zn(2+) is bound by residues His62, His70, His79, and Asp82. His119 contacts Cu cation.

Belongs to the Cu-Zn superoxide dismutase family. In terms of assembly, homodimer. The cofactor is Cu cation. Zn(2+) serves as cofactor.

It localises to the cytoplasm. The catalysed reaction is 2 superoxide + 2 H(+) = H2O2 + O2. Its function is as follows. Destroys radicals which are normally produced within the cells and which are toxic to biological systems. This Drosophila virilis (Fruit fly) protein is Superoxide dismutase [Cu-Zn].